A 160-amino-acid polypeptide reads, in one-letter code: Probable NADH dehydrogenase [ubiquinone] 1 beta subcomplex subunit 2, mitochondrial (160 aa).

The protein belongs to the complex I NDUFB2 subunit family. Complex I is composed of 45 different subunits.

The protein localises to the mitochondrion inner membrane. Accessory subunit of the mitochondrial membrane respiratory chain NADH dehydrogenase (Complex I), that is believed not to be involved in catalysis. Complex I functions in the transfer of electrons from NADH to the respiratory chain. The immediate electron acceptor for the enzyme is believed to be ubiquinone. In Caenorhabditis elegans, this protein is Probable NADH dehydrogenase [ubiquinone] 1 beta subcomplex subunit 2, mitochondrial.